We begin with the raw amino-acid sequence, 103 residues long: Phosphoribosyl-ATP pyrophosphatase (103 aa).

It belongs to the PRA-PH family.

The protein resides in the cytoplasm. It carries out the reaction 1-(5-phospho-beta-D-ribosyl)-ATP + H2O = 1-(5-phospho-beta-D-ribosyl)-5'-AMP + diphosphate + H(+). The protein operates within amino-acid biosynthesis; L-histidine biosynthesis; L-histidine from 5-phospho-alpha-D-ribose 1-diphosphate: step 2/9. This Listeria monocytogenes serotype 4a (strain HCC23) protein is Phosphoribosyl-ATP pyrophosphatase.